Here is a 322-residue protein sequence, read N- to C-terminus: Germ cell-specific gene 1-like protein (322 aa).

The Cytoplasmic segment spans residues Met-1–Arg-8. A helical membrane pass occupies residues Ala-9–Thr-29. The Extracellular segment spans residues Thr-30 to Lys-122. The chain crosses the membrane as a helical span at residues Gly-123–Phe-143. At Ser-144–Asn-163 the chain is on the cytoplasmic side. Residues Ala-164 to Tyr-184 form a helical membrane-spanning segment. At Thr-185–Gly-207 the chain is on the extracellular side. Residues Trp-208–Leu-228 traverse the membrane as a helical segment. At Asn-229 to Val-322 the chain is on the cytoplasmic side. At Ser-274 the chain carries Phosphoserine.

It belongs to the GSG1 family. As to quaternary structure, component of the inner core of AMPAR complexes. AMPAR complexes consist of an inner core made of 4 pore-forming GluA/GRIA proteins (GRIA1, GRIA2, GRIA3 and GRIA4) and 4 major auxiliary subunits arranged in a twofold symmetry. One of the two pairs of distinct binding sites is occupied either by CNIH2, CNIH3 or CACNG2, CACNG3. The other harbors CACNG2, CACNG3, CACNG4, CACNG8 or GSG1L. This inner core of AMPAR complexes is complemented by outer core constituents binding directly to the GluA/GRIA proteins at sites distinct from the interaction sites of the inner core constituents. Outer core constituents include at least PRRT1, PRRT2, CKAMP44/SHISA9, FRRS1L and NRN1. The proteins of the inner and outer core serve as a platform for other, more peripherally associated AMPAR constituents. Alone or in combination, these auxiliary subunits control the gating and pharmacology of the AMPAR complexes and profoundly impact their biogenesis and protein processing. In terms of tissue distribution, expressed in the brain, including hippocampus (at protein level).

The protein resides in the cell membrane. It is found in the synapse. As a component of the inner core of AMPAR complexes, modifies AMPA receptor (AMPAR) gating. This Mus musculus (Mouse) protein is Germ cell-specific gene 1-like protein (Gsg1l).